The sequence spans 117 residues: Large ribosomal subunit protein bL20 (117 aa).

Belongs to the bacterial ribosomal protein bL20 family.

Binds directly to 23S ribosomal RNA and is necessary for the in vitro assembly process of the 50S ribosomal subunit. It is not involved in the protein synthesizing functions of that subunit. This is Large ribosomal subunit protein bL20 from Geotalea uraniireducens (strain Rf4) (Geobacter uraniireducens).